Reading from the N-terminus, the 164-residue chain is Putative 4-hydroxy-4-methyl-2-oxoglutarate aldolase (164 aa).

Residues 80–83 and Arg-102 contribute to the substrate site; that span reads GGNL. A divalent metal cation is bound at residue Asp-103.

This sequence belongs to the class II aldolase/RraA-like family. Homotrimer. The cofactor is a divalent metal cation.

The catalysed reaction is 4-hydroxy-4-methyl-2-oxoglutarate = 2 pyruvate. The enzyme catalyses oxaloacetate + H(+) = pyruvate + CO2. Its function is as follows. Catalyzes the aldol cleavage of 4-hydroxy-4-methyl-2-oxoglutarate (HMG) into 2 molecules of pyruvate. Also contains a secondary oxaloacetate (OAA) decarboxylase activity due to the common pyruvate enolate transition state formed following C-C bond cleavage in the retro-aldol and decarboxylation reactions. The chain is Putative 4-hydroxy-4-methyl-2-oxoglutarate aldolase from Burkholderia multivorans (strain ATCC 17616 / 249).